The primary structure comprises 691 residues: UvrABC system protein C (691 aa).

A GIY-YIG domain is found at 20-97 (STSGVYLWKD…IKKHTPRYNI (78 aa)). Residues 204–239 (DATVARLEKRMKRAVRQEAFEAAARIRDDIQAIRCI) form the UVR domain. The interval 662 to 691 (RSTTAPVREEYKEHEHDPQGESPGPGRKTD) is disordered. Positions 668–680 (VREEYKEHEHDPQ) are enriched in basic and acidic residues.

The protein belongs to the UvrC family. In terms of assembly, interacts with UvrB in an incision complex.

The protein resides in the cytoplasm. The UvrABC repair system catalyzes the recognition and processing of DNA lesions. UvrC both incises the 5' and 3' sides of the lesion. The N-terminal half is responsible for the 3' incision and the C-terminal half is responsible for the 5' incision. This Treponema pallidum (strain Nichols) protein is UvrABC system protein C.